Here is a 213-residue protein sequence, read N- to C-terminus: Ribosome maturation factor RimM (213 aa).

In terms of domain architecture, PRC barrel spans 99–175 (DQDAAYISDL…RITMRLPEGL (77 aa)). A disordered region spans residues 182 to 213 (TATAREPRARRTRKRGLRKPITGADATPPDSQ). Residues 189–199 (RARRTRKRGLR) show a composition bias toward basic residues.

This sequence belongs to the RimM family. As to quaternary structure, binds ribosomal protein uS19.

The protein localises to the cytoplasm. An accessory protein needed during the final step in the assembly of 30S ribosomal subunit, possibly for assembly of the head region. Essential for efficient processing of 16S rRNA. May be needed both before and after RbfA during the maturation of 16S rRNA. It has affinity for free ribosomal 30S subunits but not for 70S ribosomes. This is Ribosome maturation factor RimM from Acidobacterium capsulatum (strain ATCC 51196 / DSM 11244 / BCRC 80197 / JCM 7670 / NBRC 15755 / NCIMB 13165 / 161).